The sequence spans 252 residues: MSAYAIIAASGVGKRMKLQGSLSKQFLQIGGFPVIYHTLSAFERSASVDSVFIATRQESIELLENMRDEYGFTKIAAIIPGGKERQDSIYNCIELIERQILDSGTAPDAILVHDGARPFIQPDEIDEIAALSAQYGACVPATKPKDTIKFISENDPGYFGRTLDRSRLLQVQTPQGFASKTLIQAHKHARLEQTYATDDAALVEEFFPEQHIRIHETGYHNIKITTPEDIHLAEAILAKLQSQQELTSSKKN.

It belongs to the IspD/TarI cytidylyltransferase family. IspD subfamily.

The catalysed reaction is 2-C-methyl-D-erythritol 4-phosphate + CTP + H(+) = 4-CDP-2-C-methyl-D-erythritol + diphosphate. It participates in isoprenoid biosynthesis; isopentenyl diphosphate biosynthesis via DXP pathway; isopentenyl diphosphate from 1-deoxy-D-xylulose 5-phosphate: step 2/6. Catalyzes the formation of 4-diphosphocytidyl-2-C-methyl-D-erythritol from CTP and 2-C-methyl-D-erythritol 4-phosphate (MEP). This chain is 2-C-methyl-D-erythritol 4-phosphate cytidylyltransferase, found in Chlorobium phaeobacteroides (strain BS1).